We begin with the raw amino-acid sequence, 80 residues long: Phosphoribosylformylglycinamidine synthase subunit PurS (80 aa).

It belongs to the PurS family. In terms of assembly, homodimer. Part of the FGAM synthase complex composed of 1 PurL, 1 PurQ and 2 PurS subunits.

It is found in the cytoplasm. It catalyses the reaction N(2)-formyl-N(1)-(5-phospho-beta-D-ribosyl)glycinamide + L-glutamine + ATP + H2O = 2-formamido-N(1)-(5-O-phospho-beta-D-ribosyl)acetamidine + L-glutamate + ADP + phosphate + H(+). It functions in the pathway purine metabolism; IMP biosynthesis via de novo pathway; 5-amino-1-(5-phospho-D-ribosyl)imidazole from N(2)-formyl-N(1)-(5-phospho-D-ribosyl)glycinamide: step 1/2. In terms of biological role, part of the phosphoribosylformylglycinamidine synthase complex involved in the purines biosynthetic pathway. Catalyzes the ATP-dependent conversion of formylglycinamide ribonucleotide (FGAR) and glutamine to yield formylglycinamidine ribonucleotide (FGAM) and glutamate. The FGAM synthase complex is composed of three subunits. PurQ produces an ammonia molecule by converting glutamine to glutamate. PurL transfers the ammonia molecule to FGAR to form FGAM in an ATP-dependent manner. PurS interacts with PurQ and PurL and is thought to assist in the transfer of the ammonia molecule from PurQ to PurL. The polypeptide is Phosphoribosylformylglycinamidine synthase subunit PurS (Archaeoglobus fulgidus (strain ATCC 49558 / DSM 4304 / JCM 9628 / NBRC 100126 / VC-16)).